The chain runs to 230 residues: MNENRTLMLNGMWNNNPALVQLLGLCPLLAVSSTVTNALGLGIATLLVLVGSNVTVSLVRDYVPKEVRIPVFVMIIASLVTCVQLLMNAYAYGLYLSLGIFIPLIVTNCIIIGRAEAFASKNDVLPAALDGFWMGLGMTSVLVVLGSLREIIGNGTLFDGADLLLGEWAKVLRIEVFHFDSAFLLALLPPGAFIGVGFLIAAKSVIDKQTAARQPKQQKQAIERARVTNV.

A run of 5 helical transmembrane segments spans residues 39-59 (LGLGIATLLVLVGSNVTVSLV), 69-89 (IPVFVMIIASLVTCVQLLMNA), 93-113 (GLYLSLGIFIPLIVTNCIIIG), 124-144 (VLPAALDGFWMGLGMTSVLVV), and 182-202 (AFLLALLPPGAFIGVGFLIAA).

The protein belongs to the NqrDE/RnfAE family. In terms of assembly, the complex is composed of six subunits: RnfA, RnfB, RnfC, RnfD, RnfE and RnfG.

It localises to the cell inner membrane. Part of a membrane-bound complex that couples electron transfer with translocation of ions across the membrane. This is Ion-translocating oxidoreductase complex subunit E from Vibrio cholerae serotype O1 (strain ATCC 39315 / El Tor Inaba N16961).